The primary structure comprises 298 residues: Homoserine kinase (298 aa).

Residue 85–95 (PMGGLGSSAAS) participates in ATP binding.

Belongs to the GHMP kinase family. Homoserine kinase subfamily.

The protein localises to the cytoplasm. The enzyme catalyses L-homoserine + ATP = O-phospho-L-homoserine + ADP + H(+). Its pathway is amino-acid biosynthesis; L-threonine biosynthesis; L-threonine from L-aspartate: step 4/5. Catalyzes the ATP-dependent phosphorylation of L-homoserine to L-homoserine phosphate. The chain is Homoserine kinase from Methanopyrus kandleri (strain AV19 / DSM 6324 / JCM 9639 / NBRC 100938).